A 511-amino-acid polypeptide reads, in one-letter code: MAYVLTETSAGYALLKASDKKIYKSSSLIQDLNSSDKVLNQFKIAAFSKFSSAANALEEANSVIDGKVSSQLEKLLEECKTDKKATLVVSETKLANAINKLGLNFNVVSDAVTLDIYRAVKEYLPELLPGLNDQDLSKMSLGLAHSIGRHKLKFSADKVDVMIIQAIALLDDLDKELNTYAMRCKEWYGWHFPELAKIVTDSVAYARIILTMGIRVNAAETDMSEILPEEIEERVKTAAEVSMGTEITPVDLINIKCLAEQIVEFAAYREQLSNYLSSRMKAIAPNLTQLVGELVGARLIAHSGSLISLAKSPASTIQILGAEKALFRALKTKHDTPKYGLLYHASLVGQASGKNKGKIARVLAAKAAVSLRYDALAEDRDDSGDIGLESRAKVESRLSQLEGRDLRTTPKVVREHKKTEITEARAYNADADTVSSAAAPADSDDESEDEEETKEEKKSKKDKKDKKRKRDDDEESKESKKSKKEKKDKKEKKEKKEKKEKKDKKSKKEKK.

The Nop domain occupies 283-403 (IAPNLTQLVG…VESRLSQLEG (121 aa)). Residues 398 to 408 (LSQLEGRDLRT) are compositionally biased toward basic and acidic residues. The disordered stretch occupies residues 398-511 (LSQLEGRDLR…KDKKSKKEKK (114 aa)). The segment covering 442–453 (DSDDESEDEEET) has biased composition (acidic residues). A coiled-coil region spans residues 442–511 (DSDDESEDEE…KDKKSKKEKK (70 aa)). Composition is skewed to basic residues over residues 460 to 469 (KKDKKDKKRK) and 480 to 511 (KKSK…KEKK).

This sequence belongs to the NOP5/NOP56 family.

The protein resides in the nucleus. It is found in the nucleolus. Its function is as follows. Required for pre-18S rRNA processing. May bind microtubules. This Kluyveromyces lactis (strain ATCC 8585 / CBS 2359 / DSM 70799 / NBRC 1267 / NRRL Y-1140 / WM37) (Yeast) protein is Nucleolar protein 58 (NOP58).